Reading from the N-terminus, the 181-residue chain is CASP-like protein 2C1 (181 aa).

Topologically, residues 1 to 7 (MALEIPK) are cytoplasmic. The chain crosses the membrane as a helical span at residues 8-28 (IEAILRGIAILLLVSTACLVG). Residues 29 to 49 (LDSQTKFVIVYEKEVTYKDLH) are Extracellular-facing. The helical transmembrane segment at 50-70 (ALVVLVYVDAVAAAYNLLQLC) threads the bilayer. At 71–98 (RCSVSALSKGNFKGSYRYLSWACFVLDQ) the chain is on the cytoplasmic side. The chain crosses the membrane as a helical span at residues 99–119 (LAAYTTFAAHSAALQHSVLGI). Over 120-140 (TGAKVFQWMKWCNRFTRFCFQ) the chain is Extracellular. A helical transmembrane segment spans residues 141–161 (IGGALTCGYIASVLMVMISFI). At 162–181 (SAFNLFRLYSPKHFLRLKGT) the chain is on the cytoplasmic side.

The protein belongs to the Casparian strip membrane proteins (CASP) family. Homodimer and heterodimers.

Its subcellular location is the cell membrane. The sequence is that of CASP-like protein 2C1 from Populus trichocarpa (Western balsam poplar).